Reading from the N-terminus, the 1488-residue chain is Chromosome partition protein MukB (1488 aa).

34–41 (GGNGAGKS) provides a ligand contact to ATP. 3 coiled-coil regions span residues 326 to 413 (LEAD…QTRA), 444 to 472 (LDTF…QTAH), and 509 to 602 (RHLA…RRAP). The flexible hinge stretch occupies residues 666–783 (PGGAEDQRLN…SLPIFGRAAR (118 aa)). Coiled coils occupy residues 835–923 (EAEI…AKLE), 977–1116 (EMLS…AKAG), and 1209–1265 (VEAI…LQSV).

It belongs to the SMC family. MukB subfamily. Homodimerization via its hinge domain. Binds to DNA via its C-terminal region. Interacts, and probably forms a ternary complex, with MukE and MukF via its C-terminal region. The complex formation is stimulated by calcium or magnesium. Interacts with tubulin-related protein FtsZ.

The protein localises to the cytoplasm. The protein resides in the nucleoid. Functionally, plays a central role in chromosome condensation, segregation and cell cycle progression. Functions as a homodimer, which is essential for chromosome partition. Involved in negative DNA supercoiling in vivo, and by this means organize and compact chromosomes. May achieve or facilitate chromosome segregation by condensation DNA from both sides of a centrally located replisome during cell division. The sequence is that of Chromosome partition protein MukB from Salmonella paratyphi C (strain RKS4594).